Reading from the N-terminus, the 355-residue chain is Phospho-N-acetylmuramoyl-pentapeptide-transferase (355 aa).

10 consecutive transmembrane segments (helical) span residues 3-23 (GVLI…PWVI), 56-76 (VIIV…GIGF), 80-100 (GLLV…DDYI), 120-140 (AAVA…AGLL), 152-172 (TSLT…IAAT), 185-205 (LAAG…FWQF), 224-244 (PLDV…FLWW), 251-271 (IFMG…IAIV), 276-296 (LLLV…MIQV), and 330-350 (FWIV…AEFL).

Belongs to the glycosyltransferase 4 family. MraY subfamily. Mg(2+) is required as a cofactor.

The protein resides in the cell membrane. The enzyme catalyses UDP-N-acetyl-alpha-D-muramoyl-L-alanyl-gamma-D-glutamyl-meso-2,6-diaminopimeloyl-D-alanyl-D-alanine + di-trans,octa-cis-undecaprenyl phosphate = di-trans,octa-cis-undecaprenyl diphospho-N-acetyl-alpha-D-muramoyl-L-alanyl-D-glutamyl-meso-2,6-diaminopimeloyl-D-alanyl-D-alanine + UMP. Its pathway is cell wall biogenesis; peptidoglycan biosynthesis. Catalyzes the initial step of the lipid cycle reactions in the biosynthesis of the cell wall peptidoglycan: transfers peptidoglycan precursor phospho-MurNAc-pentapeptide from UDP-MurNAc-pentapeptide onto the lipid carrier undecaprenyl phosphate, yielding undecaprenyl-pyrophosphoryl-MurNAc-pentapeptide, known as lipid I. The protein is Phospho-N-acetylmuramoyl-pentapeptide-transferase of Frankia alni (strain DSM 45986 / CECT 9034 / ACN14a).